Reading from the N-terminus, the 710-residue chain is F-box only protein 40 (710 aa).

Residues E53–N114 form a TRAF-type zinc finger. 2 disordered regions span residues D152–G174 and G234–L279. Residues K238 to G248 are compositionally biased toward basic and acidic residues. The F-box domain maps to L572–K626.

In terms of assembly, directly interacts with SKP1 and CUL1. In terms of tissue distribution, expressed only in heart and skeletal muscle.

It localises to the cytoplasm. In terms of biological role, probable substrate-recognition component of the SCF (SKP1-CUL1-F-box protein)-type E3 ubiquitin ligase complex that may function in myogenesis. The polypeptide is F-box only protein 40 (Fbxo40) (Mus musculus (Mouse)).